Consider the following 149-residue polypeptide: Large ribosomal subunit protein uL13 (149 aa).

This sequence belongs to the universal ribosomal protein uL13 family. In terms of assembly, part of the 50S ribosomal subunit.

In terms of biological role, this protein is one of the early assembly proteins of the 50S ribosomal subunit, although it is not seen to bind rRNA by itself. It is important during the early stages of 50S assembly. In Cyanothece sp. (strain PCC 7425 / ATCC 29141), this protein is Large ribosomal subunit protein uL13.